A 213-amino-acid chain; its full sequence is Probable nicotinate-nucleotide adenylyltransferase (213 aa).

The disordered stretch occupies residues 194 to 213; that stretch reads RKPNNGEAKDGDVKDEEAVR. The span at 200–213 shows a compositional bias: basic and acidic residues; that stretch reads EAKDGDVKDEEAVR.

Belongs to the NadD family.

The enzyme catalyses nicotinate beta-D-ribonucleotide + ATP + H(+) = deamido-NAD(+) + diphosphate. It functions in the pathway cofactor biosynthesis; NAD(+) biosynthesis; deamido-NAD(+) from nicotinate D-ribonucleotide: step 1/1. Catalyzes the reversible adenylation of nicotinate mononucleotide (NaMN) to nicotinic acid adenine dinucleotide (NaAD). The chain is Probable nicotinate-nucleotide adenylyltransferase from Mycolicibacterium smegmatis (strain ATCC 700084 / mc(2)155) (Mycobacterium smegmatis).